The primary structure comprises 185 residues: Inner membrane lipoprotein DcrB (185 aa).

Residues 1–19 form the signal peptide; it reads MRNLVKYVGIGLLVMGLAA. A lipid anchor (N-palmitoyl cysteine) is attached at C20. A lipid anchor (S-diacylglycerol cysteine) is attached at C20.

The protein belongs to the DcrB family.

Its subcellular location is the cell membrane. In terms of biological role, plays a role in cell envelope biogenesis, maintenance of cell envelope integrity and membrane homeostasis. Essential for lipoprotein maturation under conditions where membrane fluidity may be altered. The protein is Inner membrane lipoprotein DcrB of Shigella flexneri.